The primary structure comprises 80 residues: Cell division topological specificity factor (80 aa).

The protein belongs to the MinE family.

Prevents the cell division inhibition by proteins MinC and MinD at internal division sites while permitting inhibition at polar sites. This ensures cell division at the proper site by restricting the formation of a division septum at the midpoint of the long axis of the cell. The chain is Cell division topological specificity factor from Wolinella succinogenes (strain ATCC 29543 / DSM 1740 / CCUG 13145 / JCM 31913 / LMG 7466 / NCTC 11488 / FDC 602W) (Vibrio succinogenes).